Reading from the N-terminus, the 226-residue chain is 2,3-bisphosphoglycerate-dependent phosphoglycerate mutase (226 aa).

Substrate contacts are provided by residues 8-15 (RHGQSVWN), 21-22 (TG), R58, 109-112 (ERMY), K120, 136-137 (RR), and 180-181 (GN). Residue H9 is the Tele-phosphohistidine intermediate of the active site. Residue E109 is the Proton donor/acceptor of the active site.

Belongs to the phosphoglycerate mutase family. BPG-dependent PGAM subfamily.

The enzyme catalyses (2R)-2-phosphoglycerate = (2R)-3-phosphoglycerate. It functions in the pathway carbohydrate degradation; glycolysis; pyruvate from D-glyceraldehyde 3-phosphate: step 3/5. Catalyzes the interconversion of 2-phosphoglycerate and 3-phosphoglycerate. The polypeptide is 2,3-bisphosphoglycerate-dependent phosphoglycerate mutase (Chlamydia muridarum (strain MoPn / Nigg)).